A 103-amino-acid polypeptide reads, in one-letter code: Large ribosomal subunit protein bL21 (103 aa).

The protein belongs to the bacterial ribosomal protein bL21 family. Part of the 50S ribosomal subunit. Contacts protein L20.

Its function is as follows. This protein binds to 23S rRNA in the presence of protein L20. The sequence is that of Large ribosomal subunit protein bL21 from Acidovorax ebreus (strain TPSY) (Diaphorobacter sp. (strain TPSY)).